The chain runs to 1092 residues: Myelin regulatory factor (1092 aa).

Topologically, residues 1–730 are cytoplasmic; that stretch reads MDVEDENETL…CVSQRFLQAT (730 aa). Disordered regions lie at residues 145–168, 187–210, and 258–282; these read SYAAGTLPDSPPDSGSEAYSPQQL, PPSRLEHPPPPHLQGPLPPHSIHQ, and QQHGAELPVHPSKKRKHSDSPTNTL. Positions 196–205 are enriched in pro residues; the sequence is PPHLQGPLPP. The segment at residues 246–507 is a DNA-binding region (NDT80); it reads AQQSQMLHQL…SNPGQFESDS (262 aa). The Peptidase S74 domain maps to 553-662; it reads SDIRAKESVE…KLTDNLETRI (110 aa). The stretch at 646 to 677 forms a coiled coil; the sequence is GAVKELCKLTDNLETRIDELERWSHKLAKLRR. Positions 681 to 695 are enriched in polar residues; the sequence is MKSTNSHTGSSQFSR. Residues 681 to 714 are disordered; it reads MKSTNSHTGSSQFSRAGSVPYKQRPPKVMGKTVP. A helical membrane pass occupies residues 731–751; the sequence is IIALVIIMAFSVISMTTLYVL. Topologically, residues 752-1092 are lumenal; the sequence is NLRSEDDMLG…YYFRFYRLCD (341 aa). 2 disordered regions span residues 798–817 and 849–945; these read TTQLKGNTTPPPKITKSPDW and ITRK…DSRY. Polar residues-rich tracts occupy residues 849–867 and 928–945; these read ITRKTSAASAETISQTDPA and TPITPMDRTQGNSNDSRY. 4 N-linked (GlcNAc...) asparagine glycosylation sites follow: Asn941, Asn961, Asn974, and Asn996.

This sequence belongs to the MRF family. As to quaternary structure, homotrimer. In terms of processing, follows autocatalytic cleavage via the peptidase S74 domain. Autoprocessing is apparently constitutive and is essential for transcriptional activity.

It is found in the endoplasmic reticulum membrane. Its subcellular location is the nucleus. The protein resides in the cytoplasm. In terms of biological role, constitutes a precursor of the transcription factor. Mediates the autocatalytic cleavage that releases the Myelin regulatory factor, N-terminal component that specifically activates transcription of central nervous system (CNS) myelin genes. Membrane-bound part that has no transcription factor activity and remains attached to the endoplasmic reticulum membrane following cleavage. Functionally, transcription factor that specifically activates expression of myelin genes during oligodendrocyte (OL) maturation, thereby playing a central role in oligodendrocyte maturation and CNS myelination. The chain is Myelin regulatory factor (myrf) from Xenopus laevis (African clawed frog).